A 460-amino-acid chain; its full sequence is A-type ATP synthase subunit B (460 aa).

Belongs to the ATPase alpha/beta chains family. Has multiple subunits with at least A(3), B(3), C, D, E, F, H, I and proteolipid K(x).

The protein resides in the cell membrane. Functionally, component of the A-type ATP synthase that produces ATP from ADP in the presence of a proton gradient across the membrane. The B chain is a regulatory subunit. The sequence is that of A-type ATP synthase subunit B from Methanosarcina barkeri (strain Fusaro / DSM 804).